A 308-amino-acid polypeptide reads, in one-letter code: Glutaminase (308 aa).

Ser-66, Asn-117, Glu-161, Asn-168, Tyr-192, Tyr-244, and Val-262 together coordinate substrate.

It belongs to the glutaminase family. In terms of assembly, homotetramer.

It carries out the reaction L-glutamine + H2O = L-glutamate + NH4(+). The protein is Glutaminase of Shigella dysenteriae serotype 1 (strain Sd197).